The following is a 431-amino-acid chain: DNA polymerase delta subunit 3 (431 aa).

The interval 64 to 80 is necessary for function, possibly resulting from its inability to interact with PolD2; sequence QGSDSGEDLYSVVLESR. Residues 128–431 form a disordered region; sequence PGAGKIVPSA…AGIMNFFSKK (304 aa). Over residues 156 to 171 the composition is skewed to low complexity; that stretch reads SKSAVKLEPSKSSLKS. 2 stretches are compositionally biased toward basic and acidic residues: residues 172 to 200 and 252 to 271; these read EPAKSKAEKPVASKSSPEDKKTSPKEQAS and SPPESEDKSKKDASNSNKKE. A compositionally biased stretch (low complexity) spans 278–290; the sequence is PSPTKKPTTANTS. The segment covering 294-307 has biased composition (acidic residues); sequence FDEESAESSDEEEK. 2 stretches are compositionally biased toward basic and acidic residues: residues 308 to 328 and 343 to 362; these read LDMLRRKVIESDNDSDQEKAS and QPPKKSADEETIALDEKMDT. Low complexity predominate over residues 387 to 411; the sequence is PANKKVSPKAAAPVNKKKSPPSAAK.

As to quaternary structure, component of both the DNA polymerase delta and DNA polymerase zeta complexes. The DNA polymerase delta complex consists of three subunits: the catalytic subunit PolD1 and two accessory subunits PolD2/Pol31 and PolD3/Pol32. Within the delta complex, interacts with both PolD1 and PolD2. Component of the DNA polymerase zeta complex consisting of four subunits: the catalytic subunit PolZ1 and three accessory subunits PolZ2/Rev7, PolD2/Pol31 and PolD3/Pol32. Expressed in ovaries (at the protein level). Expressed in ovaries.

Its subcellular location is the nucleus. It localises to the nucleoplasm. In terms of biological role, accessory component of the DNA polymerase delta complex and possibly the DNA polymerase zeta complex. As a component of the delta complex, participates in high fidelity genome replication, including lagging strand synthesis, DNA recombination and repair. Required to recruit the DNA polymerase delta complex to the nucleus of rapidly dividing embryonic cells, and as a consequence is essential for genome replication during the earliest cell cycles. Increases the efficiency and processivity of DNA synthesis of the DNA polymerases during mitotic DNA replication and repair. During development this function is essential for preventing replication stress that results in the formation of chromosomal fragile sites (CFS) such as chromosomal breaks. Ensures genomic stability by promoting several types of DNA repair mechanisms including repairing broken dicentric chromosomes through homolog-dependent break-induced replication (BIR). During homologous recombination (HR) repair, required for maintaining the processivity of the delta complex during break-induced replication; a form of HR that requires extensive DNA synthesis such as the repair of large gaps. Able to suppress position effect variegation and may therefore have a role in the induction of chromatin state changes that likely include its activities in DNA replication and repair. This chain is DNA polymerase delta subunit 3, found in Drosophila melanogaster (Fruit fly).